Reading from the N-terminus, the 777-residue chain is MLSASRTALRAPRSVRGLATASLTKDSQVNQNLLESHSFINYKKHLENVEIVKSRLNRPLTYAEKLLYGHLDDPHNQEIERGVSYLKLRPDRVACQDATAQMAILQFMSAGIPQVATPSTVHCDHLIQAQVGGPKDLARAIDLNKEVYDFLSTACAKYNLGFWKPGSGIIHQIVLENYAFPGALLIGTDSHTPNAGGLGQLAIGVGGADAVDVMSGLPWELKAPKIIGVKLTGKMSGWTSPKDIILKLAGITTVKGGTGSIVEYFGSGVDTFSCTGMGTICNMGAEIGATTSVFPFNDSMVDYLNATGRSEIAQFAQVYKKDFLSADEGAEYDQVIEIDLNTLEPHINGPFTPDLATPVSKMKETAIANGWPLEVKVGLIGSCTNSSYEDMTRAASIIKDAGAHGLKSKALYTVSPGSEQVRATIARDGQLKTFEDFGGVVMANACGPCIGQWDRQDIKKGDKNTIVSSFNRNFTARNDGNPATHAFVASPEMATVYAISGDLGFNPITDTLVGADGKEFKLKEPQGVGLPPDGYDPGENTYQAPPEDRASVEVVISPTSDRLQKLSPFKPWDGKDAERLPILIKAVGKTTTDHISMAGPWLKYRGHLENISNNYMIGAINAENGKANEVRNHYTGKYDGVPQTAAAYRDAGHKWVVIGDENFGEGSSREHAALEPRFLGGFAIITKSFARIHETNLKKQGLLPLNFKNPADYDKINFDDEVDLIGLTTLAPGKDVILRVHPKEGEAWEAVLTHTFNSEQLEWFKHGSALNFIKSKY.

Residues Q96 and 189–191 (DSH) each bind substrate. C383, C446, and C449 together coordinate [4Fe-4S] cluster. Residues R472, R477, R605, and 668 to 669 (SR) contribute to the substrate site.

The protein belongs to the aconitase/IPM isomerase family. In terms of assembly, monomer. [4Fe-4S] cluster serves as cofactor.

It localises to the mitochondrion. The catalysed reaction is citrate = D-threo-isocitrate. It functions in the pathway carbohydrate metabolism; tricarboxylic acid cycle; isocitrate from oxaloacetate: step 2/2. Catalyzes the isomerization of citrate to isocitrate via cis-aconitate, a step in the citric acid cycle. The chain is Aconitate hydratase, mitochondrial (ACO1) from Candida albicans (strain SC5314 / ATCC MYA-2876) (Yeast).